Consider the following 214-residue polypeptide: Large ribosomal subunit protein uL3 (214 aa).

The interval T136–G156 is disordered. Q153 bears the N5-methylglutamine mark.

Belongs to the universal ribosomal protein uL3 family. As to quaternary structure, part of the 50S ribosomal subunit. Forms a cluster with proteins L14 and L19. Post-translationally, methylated by PrmB.

One of the primary rRNA binding proteins, it binds directly near the 3'-end of the 23S rRNA, where it nucleates assembly of the 50S subunit. In Thioalkalivibrio sulfidiphilus (strain HL-EbGR7), this protein is Large ribosomal subunit protein uL3.